Reading from the N-terminus, the 201-residue chain is NAD(P)H dehydrogenase (quinone) (201 aa).

The region spanning 7–192 (ILVLYYSMYG…SIARYQGEYV (186 aa)) is the Flavodoxin-like domain. FMN contacts are provided by residues 13–18 (SMYGHI) and 81–83 (TRF). NAD(+) is bound at residue tyrosine 15. Tryptophan 101 contributes to the substrate binding site. FMN contacts are provided by residues 116–121 (STGTGG) and histidine 136.

This sequence belongs to the WrbA family. FMN is required as a cofactor.

It carries out the reaction a quinone + NADH + H(+) = a quinol + NAD(+). The enzyme catalyses a quinone + NADPH + H(+) = a quinol + NADP(+). In Shigella sonnei (strain Ss046), this protein is NAD(P)H dehydrogenase (quinone).